A 475-amino-acid polypeptide reads, in one-letter code: SAM50-like protein SPAC17C9.06 (475 aa).

The region spanning 44–130 is the POTRA domain; sequence VGISSIRVTG…LDVTIQVKEK (87 aa).

It belongs to the SAM50/omp85 family. Associates with the mitochondrial contact site and cristae organizing system (MICOS) complex (also known as MINOS or MitOS complex).

It localises to the mitochondrion outer membrane. Its function is as follows. May be required for the assembly pathway of mitochondrial outer membrane proteins. The sequence is that of SAM50-like protein SPAC17C9.06 from Schizosaccharomyces pombe (strain 972 / ATCC 24843) (Fission yeast).